A 36-amino-acid polypeptide reads, in one-letter code: Potassium channel toxin alpha-KTx 11.3 (36 aa).

Intrachain disulfides connect cysteine 8–cysteine 27, cysteine 13–cysteine 33, and cysteine 17–cysteine 35.

Belongs to the short scorpion toxin superfamily. Potassium channel inhibitor family. Alpha-KTx 11 subfamily. In terms of tissue distribution, expressed by the venom gland.

It localises to the secreted. In terms of biological role, binds and inhibits voltage-sensitive potassium channels. Inhibits the vertebrate potassium channel Kv1.1/KCNA1 with low affinity. The polypeptide is Potassium channel toxin alpha-KTx 11.3 (Parabuthus granulatus (Granulated thick-tailed scorpion)).